The primary structure comprises 454 residues: Bifunctional protein GlmU (454 aa).

Residues 1–228 (MNKCAIILAA…FEETLGVNSR (228 aa)) are pyrophosphorylase. UDP-N-acetyl-alpha-D-glucosamine-binding positions include 8 to 11 (LAAG), lysine 22, glutamine 73, and 78 to 79 (GT). Aspartate 103 contributes to the Mg(2+) binding site. UDP-N-acetyl-alpha-D-glucosamine-binding residues include glycine 140, glutamate 154, asparagine 169, and asparagine 226. Asparagine 226 is a binding site for Mg(2+). A linker region spans residues 229-249 (AELAKVESIMRNRINRTHLDN). The tract at residues 250-454 (GVTIIDPLNT…EGWVERKKLK (205 aa)) is N-acetyltransferase. Positions 331 and 349 each coordinate UDP-N-acetyl-alpha-D-glucosamine. Histidine 361 (proton acceptor) is an active-site residue. Tyrosine 364 and asparagine 375 together coordinate UDP-N-acetyl-alpha-D-glucosamine. Acetyl-CoA contacts are provided by residues 384-385 (NY), alanine 421, and arginine 438.

This sequence in the N-terminal section; belongs to the N-acetylglucosamine-1-phosphate uridyltransferase family. It in the C-terminal section; belongs to the transferase hexapeptide repeat family. As to quaternary structure, homotrimer. Mg(2+) is required as a cofactor.

The protein resides in the cytoplasm. It catalyses the reaction alpha-D-glucosamine 1-phosphate + acetyl-CoA = N-acetyl-alpha-D-glucosamine 1-phosphate + CoA + H(+). The catalysed reaction is N-acetyl-alpha-D-glucosamine 1-phosphate + UTP + H(+) = UDP-N-acetyl-alpha-D-glucosamine + diphosphate. It functions in the pathway nucleotide-sugar biosynthesis; UDP-N-acetyl-alpha-D-glucosamine biosynthesis; N-acetyl-alpha-D-glucosamine 1-phosphate from alpha-D-glucosamine 6-phosphate (route II): step 2/2. The protein operates within nucleotide-sugar biosynthesis; UDP-N-acetyl-alpha-D-glucosamine biosynthesis; UDP-N-acetyl-alpha-D-glucosamine from N-acetyl-alpha-D-glucosamine 1-phosphate: step 1/1. Its pathway is bacterial outer membrane biogenesis; LPS lipid A biosynthesis. Its function is as follows. Catalyzes the last two sequential reactions in the de novo biosynthetic pathway for UDP-N-acetylglucosamine (UDP-GlcNAc). The C-terminal domain catalyzes the transfer of acetyl group from acetyl coenzyme A to glucosamine-1-phosphate (GlcN-1-P) to produce N-acetylglucosamine-1-phosphate (GlcNAc-1-P), which is converted into UDP-GlcNAc by the transfer of uridine 5-monophosphate (from uridine 5-triphosphate), a reaction catalyzed by the N-terminal domain. The chain is Bifunctional protein GlmU from Clostridium perfringens (strain SM101 / Type A).